A 420-amino-acid chain; its full sequence is Gamma-glutamyl phosphate reductase (420 aa).

Belongs to the gamma-glutamyl phosphate reductase family.

Its subcellular location is the cytoplasm. The catalysed reaction is L-glutamate 5-semialdehyde + phosphate + NADP(+) = L-glutamyl 5-phosphate + NADPH + H(+). It participates in amino-acid biosynthesis; L-proline biosynthesis; L-glutamate 5-semialdehyde from L-glutamate: step 2/2. Catalyzes the NADPH-dependent reduction of L-glutamate 5-phosphate into L-glutamate 5-semialdehyde and phosphate. The product spontaneously undergoes cyclization to form 1-pyrroline-5-carboxylate. The protein is Gamma-glutamyl phosphate reductase of Streptococcus pneumoniae serotype 19F (strain G54).